Consider the following 288-residue polypeptide: Alpha/beta hydrolase domain-containing protein 17B (288 aa).

Active-site charge relay system residues include Ser-170, Asp-235, and His-264.

Belongs to the AB hydrolase superfamily. ABHD17 family. Palmitoylated on cysteine residues located in a cysteine cluster at the N-terminus which promotes membrane localization.

It localises to the cell membrane. The protein resides in the recycling endosome membrane. Its subcellular location is the cell projection. The protein localises to the dendritic spine. It is found in the postsynaptic density membrane. It carries out the reaction S-hexadecanoyl-L-cysteinyl-[protein] + H2O = L-cysteinyl-[protein] + hexadecanoate + H(+). In terms of biological role, hydrolyzes fatty acids from S-acylated cysteine residues in proteins. Has depalmitoylating activity towards NRAS. The chain is Alpha/beta hydrolase domain-containing protein 17B from Gallus gallus (Chicken).